The sequence spans 501 residues: UPF0288 protein Maeo_0995 (501 aa).

The protein belongs to the UPF0288 family.

This is UPF0288 protein Maeo_0995 from Methanococcus aeolicus (strain ATCC BAA-1280 / DSM 17508 / OCM 812 / Nankai-3).